The sequence spans 543 residues: Zinc finger protein 280B (543 aa).

Methionine 1 is modified (N-acetylmethionine). The segment covering 1 to 10 (MEQSCEEEKE) has biased composition (acidic residues). Residues 1 to 23 (MEQSCEEEKEPEPQKNIQETKQV) form a disordered region. Phosphoserine occurs at positions 68 and 70. A disordered region spans residues 105 to 138 (SQLESRSTDSPIIIEPLSKPDYRNSSPQVVPNNS). The span at 128-138 (NSSPQVVPNNS) shows a compositional bias: low complexity. Glycyl lysine isopeptide (Lys-Gly) (interchain with G-Cter in SUMO2) cross-links involve residues lysine 173, lysine 247, and lysine 261. C2H2-type zinc fingers lie at residues 343–366 (TTCQ…ENVH), 373–396 (TVCK…KDHH), 432–454 (LLCP…YRGH), and 460–483 (HQCS…TQCH). The disordered stretch occupies residues 518-543 (ASITVSTSDSEPSLPRSKSKISKKSH). The span at 534 to 543 (SKSKISKKSH) shows a compositional bias: basic residues.

It is found in the nucleus. In terms of biological role, may function as a transcription factor. This chain is Zinc finger protein 280B (ZNF280B), found in Homo sapiens (Human).